The chain runs to 664 residues: Type IV inositol polyphosphate 5-phosphatase 3 (664 aa).

Positions 35–76 (GRDPEYGADTDNESENEDAREDNDDSSSDEEGGSGSRGRESK) are disordered. The span at 40–66 (YGADTDNESENEDAREDNDDSSSDEEG) shows a compositional bias: acidic residues. 2 catalytic regions span residues 514-529 (ERII…LSSS) and 592-607 (PKRT…SYGK).

The protein belongs to the inositol polyphosphate 5-phosphatase family.

The catalysed reaction is a 1,2-diacyl-sn-glycero-3-phospho-(1D-myo-inositol-4,5-bisphosphate) + H2O = a 1,2-diacyl-sn-glycero-3-phospho-(1D-myo-inositol 4-phosphate) + phosphate. The enzyme catalyses a 1,2-diacyl-sn-glycero-3-phospho-(1D-myo-inositol-3,4,5-trisphosphate) + H2O = a 1,2-diacyl-sn-glycero-3-phospho-(1D-myo-inositol-3,4-bisphosphate) + phosphate. Has phosphatase activity toward PtdIns(4,5)P2 and PtdIns(3,4,5)P3. This is Type IV inositol polyphosphate 5-phosphatase 3 from Arabidopsis thaliana (Mouse-ear cress).